Reading from the N-terminus, the 1115-residue chain is Ubiquitin C-terminal hydrolase 13 (1115 aa).

The interval Met-1 to Pro-51 is disordered. Positions Ser-53–Val-178 constitute an MATH domain. Positions Val-198–Glu-522 constitute a USP domain. Residue Cys-207 is the Nucleophile of the active site. The active-site Proton acceptor is the His-454.

Belongs to the peptidase C19 family. In terms of assembly, interacts with SIC/RON3. Interacts with RGI1 and RGI2.

It catalyses the reaction Thiol-dependent hydrolysis of ester, thioester, amide, peptide and isopeptide bonds formed by the C-terminal Gly of ubiquitin (a 76-residue protein attached to proteins as an intracellular targeting signal).. Functionally, recognizes and hydrolyzes the peptide bond at the C-terminal Gly of ubiquitin. Involved in the processing of poly-ubiquitin precursors as well as that of ubiquitinated proteins. Positive regulator of root meristem development that, together with UBP12, prevents the ubiquitination and turnover of RGFR1 induced by the RGF1 hormone peptide, thus influencing PLT1 and PLT2 expression. The protein is Ubiquitin C-terminal hydrolase 13 of Arabidopsis thaliana (Mouse-ear cress).